The primary structure comprises 219 residues: C-8 sterol isomerase erg2 (219 aa).

The helical transmembrane segment at 1-21 (MKLTKFLTVFIPFIAGLIYYI) threads the bilayer.

It belongs to the ERG2 family.

It localises to the endoplasmic reticulum membrane. It catalyses the reaction fecosterol = episterol. It participates in steroid metabolism; ergosterol biosynthesis. Its function is as follows. C-8 sterol isomerase; part of the third module of ergosterol biosynthesis pathway that includes by the late steps of the pathway. Erg2 catalyzes the reaction which results in unsaturation at C-7 in the B ring of sterols and thus converts fecosterol to episterol. The third module or late pathway involves the ergosterol synthesis itself through consecutive reactions that mainly occur in the endoplasmic reticulum (ER) membrane. Firstly, the squalene synthase erg9 catalyzes the condensation of 2 farnesyl pyrophosphate moieties to form squalene, which is the precursor of all steroids. Secondly, squalene is converted into lanosterol by the consecutive action of the squalene epoxidase erg1 and the lanosterol synthase erg7. The lanosterol 14-alpha-demethylase erg11/cyp1 catalyzes C14-demethylation of lanosterol to produce 4,4'-dimethyl cholesta-8,14,24-triene-3-beta-ol. In the next steps, a complex process involving various demethylation, reduction and desaturation reactions catalyzed by the C-14 reductase erg24 and the C-4 demethylation complex erg25-erg26-erg27 leads to the production of zymosterol. Erg28 likely functions in the C-4 demethylation complex reaction by tethering erg26 and Erg27 to the endoplasmic reticulum or to facilitate interaction between these proteins. Then, the sterol 24-C-methyltransferase erg6 catalyzes the methyl transfer from S-adenosyl-methionine to the C-24 of zymosterol to form fecosterol. The C-8 sterol isomerase erg2 catalyzes the reaction which results in unsaturation at C-7 in the B ring of sterols and thus converts fecosterol to episterol. The sterol-C5-desaturases erg31 and erg32 then catalyze the introduction of a C-5 double bond in the B ring to produce 5-dehydroepisterol. The C-22 sterol desaturase erg5 further converts 5-dehydroepisterol into ergosta-5,7,22,24(28)-tetraen-3beta-ol by forming the C-22(23) double bond in the sterol side chain. Finally, ergosta-5,7,22,24(28)-tetraen-3beta-ol is substrate of the C-24(28) sterol reductase erg4 to produce ergosterol. In the genus Schizosaccharomyces, a second route exists between lanosterol and fecosterol, via the methylation of lanosterol to eburicol by erg6, followed by C14-demethylation by erg11/cyp1 and C4-demethylation by the demethylation complex erg25-erg26-erg27. This chain is C-8 sterol isomerase erg2, found in Schizosaccharomyces pombe (strain 972 / ATCC 24843) (Fission yeast).